Consider the following 260-residue polypeptide: Taurine import ATP-binding protein TauB (260 aa).

The region spanning 6-235 (AHQVSVVYAS…RYAAGESMRS (230 aa)) is the ABC transporter domain. 40–47 (GASGCGKS) is an ATP binding site.

It belongs to the ABC transporter superfamily. Taurine importer (TC 3.A.1.17.1) family. In terms of assembly, the complex is composed of two ATP-binding proteins (TauB), two transmembrane proteins (TauC) and a solute-binding protein (TauA).

It is found in the cell inner membrane. It carries out the reaction taurine(out) + ATP + H2O = taurine(in) + ADP + phosphate + H(+). Part of the ABC transporter complex TauABC involved in taurine import. Responsible for energy coupling to the transport system. The sequence is that of Taurine import ATP-binding protein TauB from Burkholderia thailandensis (strain ATCC 700388 / DSM 13276 / CCUG 48851 / CIP 106301 / E264).